The chain runs to 327 residues: Aliphatic sulfonates import ATP-binding protein SsuB (327 aa).

The segment at 21-54 (ELAQPRIADGDAQDAAVYERDGGAHAPPDGDRAD) is disordered. Positions 37–54 (VYERDGGAHAPPDGDRAD) are enriched in basic and acidic residues. Residues 66–285 (VRLTRVSKRY…ARASAAFAAL (220 aa)) enclose the ABC transporter domain. 98–105 (GRSGCGKS) serves as a coordination point for ATP. The interval 300–327 (APAAPNAAGPEGASRGRAAPASGLRWAV) is disordered.

This sequence belongs to the ABC transporter superfamily. Aliphatic sulfonates importer (TC 3.A.1.17.2) family. As to quaternary structure, the complex is composed of two ATP-binding proteins (SsuB), two transmembrane proteins (SsuC) and a solute-binding protein (SsuA).

The protein localises to the cell inner membrane. It catalyses the reaction ATP + H2O + aliphatic sulfonate-[sulfonate-binding protein]Side 1 = ADP + phosphate + aliphatic sulfonateSide 2 + [sulfonate-binding protein]Side 1.. In terms of biological role, part of the ABC transporter complex SsuABC involved in aliphatic sulfonates import. Responsible for energy coupling to the transport system. This is Aliphatic sulfonates import ATP-binding protein SsuB from Burkholderia pseudomallei (strain K96243).